A 116-amino-acid polypeptide reads, in one-letter code: Peptidyl-tRNA hydrolase (116 aa).

This sequence belongs to the PTH2 family.

It localises to the cytoplasm. The enzyme catalyses an N-acyl-L-alpha-aminoacyl-tRNA + H2O = an N-acyl-L-amino acid + a tRNA + H(+). The natural substrate for this enzyme may be peptidyl-tRNAs which drop off the ribosome during protein synthesis. This Methanococcus maripaludis (strain C7 / ATCC BAA-1331) protein is Peptidyl-tRNA hydrolase.